Reading from the N-terminus, the 175-residue chain is NAD(P)H-quinone oxidoreductase subunit I, chloroplastic (175 aa).

4Fe-4S ferredoxin-type domains are found at residues 55 to 84 and 95 to 124; these read GRIH…VNWE and QTYS…MTEE. Cysteine 64, cysteine 67, cysteine 70, cysteine 74, cysteine 104, cysteine 107, cysteine 110, and cysteine 114 together coordinate [4Fe-4S] cluster.

Belongs to the complex I 23 kDa subunit family. As to quaternary structure, NDH is composed of at least 16 different subunits, 5 of which are encoded in the nucleus. The cofactor is [4Fe-4S] cluster.

The protein resides in the plastid. The protein localises to the chloroplast thylakoid membrane. It carries out the reaction a plastoquinone + NADH + (n+1) H(+)(in) = a plastoquinol + NAD(+) + n H(+)(out). It catalyses the reaction a plastoquinone + NADPH + (n+1) H(+)(in) = a plastoquinol + NADP(+) + n H(+)(out). Functionally, NDH shuttles electrons from NAD(P)H:plastoquinone, via FMN and iron-sulfur (Fe-S) centers, to quinones in the photosynthetic chain and possibly in a chloroplast respiratory chain. The immediate electron acceptor for the enzyme in this species is believed to be plastoquinone. Couples the redox reaction to proton translocation, and thus conserves the redox energy in a proton gradient. In Chlorokybus atmophyticus (Soil alga), this protein is NAD(P)H-quinone oxidoreductase subunit I, chloroplastic.